The chain runs to 541 residues: Ankyrin repeat domain-containing protein 13C (541 aa).

Over residues methionine 1–glycine 20 the composition is skewed to basic and acidic residues. The disordered stretch occupies residues methionine 1–aspartate 27. ANK repeat units lie at residues proline 111–asparagine 142, histidine 143–valine 172, and glutamine 176–arginine 205. Residue serine 411 is modified to Phosphoserine.

It is found in the endoplasmic reticulum membrane. In terms of biological role, acts as a molecular chaperone for G protein-coupled receptors, regulating their biogenesis and exit from the ER. The polypeptide is Ankyrin repeat domain-containing protein 13C (ANKRD13C) (Homo sapiens (Human)).